The primary structure comprises 297 residues: 4-diphosphocytidyl-2-C-methyl-D-erythritol kinase (297 aa).

Lys10 is an active-site residue. 94-104 (PVAAGLAGGSS) serves as a coordination point for ATP. Asp136 is a catalytic residue.

It belongs to the GHMP kinase family. IspE subfamily.

The enzyme catalyses 4-CDP-2-C-methyl-D-erythritol + ATP = 4-CDP-2-C-methyl-D-erythritol 2-phosphate + ADP + H(+). The protein operates within isoprenoid biosynthesis; isopentenyl diphosphate biosynthesis via DXP pathway; isopentenyl diphosphate from 1-deoxy-D-xylulose 5-phosphate: step 3/6. Functionally, catalyzes the phosphorylation of the position 2 hydroxy group of 4-diphosphocytidyl-2C-methyl-D-erythritol. The sequence is that of 4-diphosphocytidyl-2-C-methyl-D-erythritol kinase from Shouchella clausii (strain KSM-K16) (Alkalihalobacillus clausii).